Reading from the N-terminus, the 582-residue chain is Sodium-dependent low-affinity dicarboxylate transporter 1 (582 aa).

12 consecutive transmembrane segments (helical) span residues 17-37 (SFVI…VGDS), 59-79 (ALPL…FGIM), 87-107 (AYLP…LAVE), 130-150 (VMAG…NTAT), 224-244 (LMLS…TGTA), 271-291 (IFAF…LYLL), 317-337 (FSFA…LWIL), 353-373 (EFVS…TLPE), 401-421 (FPWS…GVKE), 455-475 (TNVC…AELA), 482-502 (PLNF…LPVA), and 527-547 (VTLG…GFVF).

Belongs to the SLC13A/DASS transporter (TC 2.A.47) family. NADC subfamily. Nad-1 and nad-2 are coexpressed in the intestinal tract from early larvae to adults, expression is from the pharynx through to the anus. Expression level is significantly greater in the anterior half of the intestine than in the posterior half.

The protein localises to the membrane. Low affinity sodium-dicarboxylate cotransporter that accepts a range of tricarboxylic acid-cycle intermediates with 4-5 carbon atoms. There is no interaction with monocarboxylates. The protein is Sodium-dependent low-affinity dicarboxylate transporter 1 (nac-1) of Caenorhabditis elegans.